A 388-amino-acid chain; its full sequence is GTPase Obg (388 aa).

The Obg domain occupies serine 4 to leucine 162. The region spanning alanine 163–asparagine 329 is the OBG-type G domain. GTP contacts are provided by residues glycine 169–serine 176, phenylalanine 194–glutamate 198, aspartate 216–glycine 219, threonine 283–aspartate 286, and serine 310–valine 312. The Mg(2+) site is built by serine 176 and threonine 196. The tract at residues leucine 352–lysine 388 is disordered. Positions glycine 356–lysine 388 are enriched in acidic residues.

The protein belongs to the TRAFAC class OBG-HflX-like GTPase superfamily. OBG GTPase family. Monomer. The cofactor is Mg(2+).

It is found in the cytoplasm. An essential GTPase which binds GTP, GDP and possibly (p)ppGpp with moderate affinity, with high nucleotide exchange rates and a fairly low GTP hydrolysis rate. Plays a role in control of the cell cycle, stress response, ribosome biogenesis and in those bacteria that undergo differentiation, in morphogenesis control. The chain is GTPase Obg from Bacteroides thetaiotaomicron (strain ATCC 29148 / DSM 2079 / JCM 5827 / CCUG 10774 / NCTC 10582 / VPI-5482 / E50).